The sequence spans 276 residues: Protein HemX (276 aa).

The next 8 helical transmembrane spans lie at 9–29 (LNEGTIVIYALSVLFYFIDFL), 40–60 (FWLLSIVWTLQTVYLAYFMWV), 66–86 (VLNVTEALYFYAWVLVTLSLV), 93–113 (VDFIVFFTNVIGFSMIAIHTF), 132–152 (LVIHITMAILSYGAFSLSFVF), 187–207 (VLNVIGVPMLLLSLILGVIWA), 217–237 (FDAKVLGSFVVLLLYSYYLYI), and 247–267 (VAALWNTACFLVLMINYFLLG).

This sequence to M.leprae U1620K.

It localises to the cell membrane. In terms of biological role, required for HemL synthesis. This Bacillus subtilis (strain 168) protein is Protein HemX (hemX).